The chain runs to 188 residues: Large ribosomal subunit protein eL18B (188 aa).

Residues 153 to 188 are disordered; that stretch reads GKAPGTPHSRTKPYVLSKGRKFERARGRRASRGYKN. Residues 178 to 188 show a composition bias toward basic residues; sequence RGRRASRGYKN.

This sequence belongs to the eukaryotic ribosomal protein eL18 family. As to quaternary structure, component of the large ribosomal subunit.

It is found in the cytoplasm. The protein resides in the cytosol. Its subcellular location is the rough endoplasmic reticulum. In terms of biological role, component of the large ribosomal subunit. The ribosome is a large ribonucleoprotein complex responsible for the synthesis of proteins in the cell. This chain is Large ribosomal subunit protein eL18B (rpl18-b), found in Xenopus laevis (African clawed frog).